We begin with the raw amino-acid sequence, 102 residues long: Iron-sulfur cluster assembly protein CyaY (102 aa).

The protein belongs to the frataxin family.

Functionally, involved in iron-sulfur (Fe-S) cluster assembly. May act as a regulator of Fe-S biogenesis. The polypeptide is Iron-sulfur cluster assembly protein CyaY (Histophilus somni (strain 2336) (Haemophilus somnus)).